We begin with the raw amino-acid sequence, 366 residues long: 4-hydroxy-3-methylbut-2-en-1-yl diphosphate synthase (flavodoxin) (366 aa).

Residues Cys-270, Cys-273, Cys-305, and Glu-312 each coordinate [4Fe-4S] cluster.

This sequence belongs to the IspG family. [4Fe-4S] cluster serves as cofactor.

The enzyme catalyses (2E)-4-hydroxy-3-methylbut-2-enyl diphosphate + oxidized [flavodoxin] + H2O + 2 H(+) = 2-C-methyl-D-erythritol 2,4-cyclic diphosphate + reduced [flavodoxin]. It functions in the pathway isoprenoid biosynthesis; isopentenyl diphosphate biosynthesis via DXP pathway; isopentenyl diphosphate from 1-deoxy-D-xylulose 5-phosphate: step 5/6. In terms of biological role, converts 2C-methyl-D-erythritol 2,4-cyclodiphosphate (ME-2,4cPP) into 1-hydroxy-2-methyl-2-(E)-butenyl 4-diphosphate. This chain is 4-hydroxy-3-methylbut-2-en-1-yl diphosphate synthase (flavodoxin), found in Wigglesworthia glossinidia brevipalpis.